The primary structure comprises 31 residues: MEALVYTFLLVGTLGIIFFSIFFRDPPRMIK.

The chain crosses the membrane as a helical span at residues 3 to 23; the sequence is ALVYTFLLVGTLGIIFFSIFF.

It belongs to the PsbT family. In terms of assembly, PSII is composed of 1 copy each of membrane proteins PsbA, PsbB, PsbC, PsbD, PsbE, PsbF, PsbH, PsbI, PsbJ, PsbK, PsbL, PsbM, PsbT, PsbY, PsbZ, Psb30/Ycf12, at least 3 peripheral proteins of the oxygen-evolving complex and a large number of cofactors. It forms dimeric complexes.

The protein localises to the plastid. The protein resides in the chloroplast thylakoid membrane. In terms of biological role, found at the monomer-monomer interface of the photosystem II (PS II) dimer, plays a role in assembly and dimerization of PSII. PSII is a light-driven water plastoquinone oxidoreductase, using light energy to abstract electrons from H(2)O, generating a proton gradient subsequently used for ATP formation. This chain is Photosystem II reaction center protein T, found in Chlamydomonas reinhardtii (Chlamydomonas smithii).